Here is a 250-residue protein sequence, read N- to C-terminus: NADH-quinone oxidoreductase subunit C (250 aa).

It belongs to the complex I 30 kDa subunit family. NDH-1 is composed of 14 different subunits. Subunits NuoB, C, D, E, F, and G constitute the peripheral sector of the complex.

The protein resides in the cell inner membrane. The enzyme catalyses a quinone + NADH + 5 H(+)(in) = a quinol + NAD(+) + 4 H(+)(out). Its function is as follows. NDH-1 shuttles electrons from NADH, via FMN and iron-sulfur (Fe-S) centers, to quinones in the respiratory chain. The immediate electron acceptor for the enzyme in this species is believed to be ubiquinone. Couples the redox reaction to proton translocation (for every two electrons transferred, four hydrogen ions are translocated across the cytoplasmic membrane), and thus conserves the redox energy in a proton gradient. In Xylella fastidiosa (strain M23), this protein is NADH-quinone oxidoreductase subunit C.